The sequence spans 901 residues: Viral-enhancing factor (901 aa).

A Peptidase M60 domain is found at 27–330; the sequence is HRRTEVGVVL…IFTWLYNPQR (304 aa). N-linked (GlcNAc...) asparagine; by host glycans are attached at residues asparagine 65, asparagine 265, asparagine 339, asparagine 349, asparagine 540, asparagine 594, asparagine 595, asparagine 642, asparagine 683, and asparagine 698.

Functionally, involved in disruption of the peritrophic membrane and fusion of nucleocapsids with midgut cells. The chain is Viral-enhancing factor (VEF) from Trichoplusia ni (Cabbage looper).